Here is a 668-residue protein sequence, read N- to C-terminus: DNA ligase (668 aa).

NAD(+) contacts are provided by residues 31-35, 80-81, and Glu112; these read DAEYD and SL. Lys114 serves as the catalytic N6-AMP-lysine intermediate. The NAD(+) site is built by Arg135, Glu172, Lys289, and Lys313. Positions 407, 410, 425, and 431 each coordinate Zn(2+). The region spanning 591–668 is the BRCT domain; sequence SVPQPLAGKV…NEEQLIELLN (78 aa).

It belongs to the NAD-dependent DNA ligase family. LigA subfamily. Mg(2+) serves as cofactor. The cofactor is Mn(2+).

It catalyses the reaction NAD(+) + (deoxyribonucleotide)n-3'-hydroxyl + 5'-phospho-(deoxyribonucleotide)m = (deoxyribonucleotide)n+m + AMP + beta-nicotinamide D-nucleotide.. Functionally, DNA ligase that catalyzes the formation of phosphodiester linkages between 5'-phosphoryl and 3'-hydroxyl groups in double-stranded DNA using NAD as a coenzyme and as the energy source for the reaction. It is essential for DNA replication and repair of damaged DNA. This Aliivibrio fischeri (strain MJ11) (Vibrio fischeri) protein is DNA ligase.